The chain runs to 91 residues: UPF0223 protein SAR1071 (91 aa).

This sequence belongs to the UPF0223 family.

The protein is UPF0223 protein SAR1071 of Staphylococcus aureus (strain MRSA252).